Consider the following 194-residue polypeptide: dCTP deaminase (194 aa).

DCTP contacts are provided by residues 110 to 115 (RSSLAR), D128, 136 to 138 (VLE), Y171, K178, and Q182. The active-site Proton donor/acceptor is E138.

It belongs to the dCTP deaminase family. Homotrimer.

The catalysed reaction is dCTP + H2O + H(+) = dUTP + NH4(+). The protein operates within pyrimidine metabolism; dUMP biosynthesis; dUMP from dCTP (dUTP route): step 1/2. Catalyzes the deamination of dCTP to dUTP. In Haemophilus ducreyi (strain 35000HP / ATCC 700724), this protein is dCTP deaminase.